The chain runs to 106 residues: MRGMGNMNNMMKQMQKMQKDMAKAQEELKDLTVTGTAGGEMVSVVADGHKNIIDVIIKEEVVDPDDVEMIQDLVLAATNDALKKVDELVSSKMGKFTQGMNMPGMF.

A compositionally biased stretch (low complexity) spans 1-16; sequence MRGMGNMNNMMKQMQK. A disordered region spans residues 1 to 23; that stretch reads MRGMGNMNNMMKQMQKMQKDMAK.

The protein belongs to the YbaB/EbfC family. In terms of assembly, homodimer.

It is found in the cytoplasm. It localises to the nucleoid. Binds to DNA and alters its conformation. May be involved in regulation of gene expression, nucleoid organization and DNA protection. This Exiguobacterium sibiricum (strain DSM 17290 / CCUG 55495 / CIP 109462 / JCM 13490 / 255-15) protein is Nucleoid-associated protein Exig_0019.